Consider the following 271-residue polypeptide: Probable esterase D14L (271 aa).

Serine 96 serves as the catalytic Nucleophile. Residues aspartate 218 and histidine 247 contribute to the active site.

This sequence belongs to the AB hydrolase superfamily. As to quaternary structure, component of an intracellular receptor complex involved in the detection of the smoke compound karrikin. As to expression, expressed constitutively in all organs (e.g. roots, stems, leaves, panicles and embryos).

It is found in the nucleus. The protein localises to the cytoplasm. Its function is as follows. May be involved in strigolactone signaling pathway. Essential for plant responses to karrikins, a class of butenolide compounds, structurally similar to strigolactones, released from burning vegetation that stimulate seed germination and enhance seedling photomorphogenesis. Mediates a specific perception of karrikin. Required for the establishment of symbiosis with the arbuscular mycorrhizal fungi (AMF) Rhizophagus irregularis and Gigaspora rosea. Karrikin binding induces a conformational change. This chain is Probable esterase D14L (D14L), found in Oryza sativa subsp. japonica (Rice).